Consider the following 443-residue polypeptide: Glucose-6-phosphate isomerase (443 aa).

Glutamate 285 serves as the catalytic Proton donor. Active-site residues include histidine 306 and lysine 420.

The protein belongs to the GPI family.

The protein resides in the cytoplasm. It carries out the reaction alpha-D-glucose 6-phosphate = beta-D-fructose 6-phosphate. The protein operates within carbohydrate biosynthesis; gluconeogenesis. Its pathway is carbohydrate degradation; glycolysis; D-glyceraldehyde 3-phosphate and glycerone phosphate from D-glucose: step 2/4. Its function is as follows. Catalyzes the reversible isomerization of glucose-6-phosphate to fructose-6-phosphate. In Staphylococcus aureus (strain bovine RF122 / ET3-1), this protein is Glucose-6-phosphate isomerase.